Consider the following 145-residue polypeptide: YIDAETMTLHHDKHHATYVANANAALEKHPEIGEDLEALLADVEQIPADIRQALINNGGGHLNHALFWELLSPEKQEPTAEVAAAINEAFGSFEAFQEAFTAAATTRFGSGWAWLVVNDEGKLEVVSTANQDTPISDGKKPILAL.

Fe(3+) contacts are provided by H10 and H64. Mn(2+) contacts are provided by H10 and H64.

Belongs to the iron/manganese superoxide dismutase family. It depends on Mn(2+) as a cofactor. Requires Fe(3+) as cofactor.

It carries out the reaction 2 superoxide + 2 H(+) = H2O2 + O2. Its function is as follows. Destroys superoxide anion radicals which are normally produced within the cells and which are toxic to biological systems. Catalyzes the dismutation of superoxide anion radicals into O2 and H2O2 by successive reduction and oxidation of the transition metal ion at the active site. This is Superoxide dismutase [Mn/Fe] (sodA) from Streptococcus salivarius.